The chain runs to 350 residues: Protein TRIGALACTOSYLDIACYLGLYCEROL 1, chloroplastic (350 aa).

Residues 67–86 (SMSMLEEETSTENNAPSQEA) form a disordered region. The chain crosses the membrane as a helical span at residues 98-117 (YIWRGLSVPIIAGQVVLRIL). At 118–136 (KGKIHWRNTLQQLERTGPK) the chain is on the stromal side. The chain crosses the membrane as a helical span at residues 137–157 (SLGVCLLTSTFVGMAFTIQFV). Residues 158-168 (REFTRLGLNRS) lie on the Chloroplast intermembrane side of the membrane. Residues 169–189 (IGGVLALAFSRELSPVITSIV) traverse the membrane as a helical segment. Over 190 to 229 (VAGRMGSAFAAELGTMQVSEQTDTLRVLGADPIDYLITPR) the chain is Stromal. The chain crosses the membrane as a helical span at residues 230–250 (VIASCLALPFLTLMCFTVGMA). At 251–288 (SSALLSDAVYGISINIIMDSAHRALRPWDIVSAMIKSQ) the chain is on the chloroplast intermembrane side. The chain crosses the membrane as a helical span at residues 289–309 (VFGAIISVISCSWGVTTTGGA). Topologically, residues 310 to 318 (KGVGESTTS) are stromal. The helical transmembrane segment at 319–339 (AVVMSLVGIFIADFVLSSFFF) threads the bilayer. The Chloroplast intermembrane segment spans residues 340–350 (QGAGDSLKNCV).

Belongs to the MlaE permease family. In terms of assembly, permease subunit of the TGD complex, a lipid translocator at the inner chloroplast envelope membrane made of TGD1, TGD2 and TGD3. Interacts with TGD2 and TGD3 with an overall subunit stoichiometry of 2 TGD1, 2 TGD3 and 8 to 12 TGD2. Interacts with TGD5. In terms of tissue distribution, high levels in green tissues, but low levels in nongreen tissues such as roots.

The protein localises to the plastid. Its subcellular location is the chloroplast inner membrane. Required during embryogenesis. Permease involved in lipid transfer from the endoplasmic reticulum (ER) to plastids, and necessary for thylakoids formation. The polypeptide is Protein TRIGALACTOSYLDIACYLGLYCEROL 1, chloroplastic (Arabidopsis thaliana (Mouse-ear cress)).